We begin with the raw amino-acid sequence, 324 residues long: Glyoxylate/hydroxypyruvate reductase B (324 aa).

Catalysis depends on residues R237 and E266. Residue H285 is the Proton donor of the active site.

The protein belongs to the D-isomer specific 2-hydroxyacid dehydrogenase family. GhrB subfamily. In terms of assembly, homodimer.

Its subcellular location is the cytoplasm. It catalyses the reaction glycolate + NADP(+) = glyoxylate + NADPH + H(+). It carries out the reaction (R)-glycerate + NAD(+) = 3-hydroxypyruvate + NADH + H(+). The catalysed reaction is (R)-glycerate + NADP(+) = 3-hydroxypyruvate + NADPH + H(+). Functionally, catalyzes the NADPH-dependent reduction of glyoxylate and hydroxypyruvate into glycolate and glycerate, respectively. The polypeptide is Glyoxylate/hydroxypyruvate reductase B (Salmonella schwarzengrund (strain CVM19633)).